The chain runs to 195 residues: 4'-phosphopantetheinyl transferase AcpT (195 aa).

This sequence belongs to the P-Pant transferase superfamily. Gsp/Sfp/HetI/AcpT family.

It catalyses the reaction apo-[ACP] + CoA = holo-[ACP] + adenosine 3',5'-bisphosphate + H(+). Functionally, may be involved in an alternative pathway for phosphopantetheinyl transfer and holo-ACP synthesis in E.coli. The native apo-protein substrate is unknown. Is able to functionally replace AcpS in vivo but only when expressed at high levels. In Escherichia coli (strain K12), this protein is 4'-phosphopantetheinyl transferase AcpT.